The chain runs to 166 residues: Regulatory protein RecX (166 aa).

This sequence belongs to the RecX family.

It localises to the cytoplasm. In terms of biological role, modulates RecA activity. In Salmonella agona (strain SL483), this protein is Regulatory protein RecX.